A 261-amino-acid chain; its full sequence is N-acetyltransferase ECO1 (261 aa).

The CCHH-type zinc finger occupies 29-53 (LKCPKCEMKYSPNSIDDVATHKKYH). Residues 102–261 (VMIQENKPAE…SGHILIPCYL (160 aa)) form the N-acetyltransferase domain.

It belongs to the acetyltransferase family. ECO subfamily.

Its subcellular location is the nucleus. Functionally, probable acetyltransferase required for the establishment of sister chromatid cohesion and couple the processes of cohesion and DNA replication to ensure that only sister chromatids become paired together. In contrast to the structural cohesins, the deposition and establishment factors are required only during S phase. Acts by acetylating the cohesin complex component SMC3. The chain is N-acetyltransferase ECO1 (ECO1) from Candida glabrata (strain ATCC 2001 / BCRC 20586 / JCM 3761 / NBRC 0622 / NRRL Y-65 / CBS 138) (Yeast).